We begin with the raw amino-acid sequence, 298 residues long: Diphthine methyl ester synthase (298 aa).

S-adenosyl-L-methionine is bound by residues L9, D85, G88, 113-114 (SV), L164, L222, and H247.

The protein belongs to the diphthine synthase family.

It localises to the cytoplasm. It catalyses the reaction 2-[(3S)-amino-3-carboxypropyl]-L-histidyl-[translation elongation factor 2] + 4 S-adenosyl-L-methionine = diphthine methyl ester-[translation elongation factor 2] + 4 S-adenosyl-L-homocysteine + 3 H(+). Its pathway is protein modification; peptidyl-diphthamide biosynthesis. Functionally, S-adenosyl-L-methionine-dependent methyltransferase that catalyzes four methylations of the modified target histidine residue in translation elongation factor 2 (EF-2), to form an intermediate called diphthine methyl ester. The four successive methylation reactions represent the second step of diphthamide biosynthesis. The protein is Diphthine methyl ester synthase (DPH5) of Kluyveromyces lactis (strain ATCC 8585 / CBS 2359 / DSM 70799 / NBRC 1267 / NRRL Y-1140 / WM37) (Yeast).